The primary structure comprises 386 residues: Succinate--CoA ligase [ADP-forming] subunit beta (386 aa).

Positions 9–244 constitute an ATP-grasp domain; sequence KELFANYGVP…LDEEEPLEVE (236 aa). ATP is bound by residues K46, 53–55, E99, L102, and E107; that span reads GRG. Residues N199 and D213 each coordinate Mg(2+). Residues N264 and 321–323 contribute to the substrate site; that span reads GIL.

This sequence belongs to the succinate/malate CoA ligase beta subunit family. In terms of assembly, heterotetramer of two alpha and two beta subunits. Requires Mg(2+) as cofactor.

It carries out the reaction succinate + ATP + CoA = succinyl-CoA + ADP + phosphate. It catalyses the reaction GTP + succinate + CoA = succinyl-CoA + GDP + phosphate. It functions in the pathway carbohydrate metabolism; tricarboxylic acid cycle; succinate from succinyl-CoA (ligase route): step 1/1. In terms of biological role, succinyl-CoA synthetase functions in the citric acid cycle (TCA), coupling the hydrolysis of succinyl-CoA to the synthesis of either ATP or GTP and thus represents the only step of substrate-level phosphorylation in the TCA. The beta subunit provides nucleotide specificity of the enzyme and binds the substrate succinate, while the binding sites for coenzyme A and phosphate are found in the alpha subunit. In Desulfatibacillum aliphaticivorans, this protein is Succinate--CoA ligase [ADP-forming] subunit beta.